A 401-amino-acid chain; its full sequence is Argininosuccinate synthase (401 aa).

9 to 17 (AYSGGLDTS) is a binding site for ATP. An L-citrulline-binding site is contributed by Tyr-86. Gly-116 is an ATP binding site. 3 residues coordinate L-aspartate: Thr-118, Asn-122, and Asp-123. Residue Asn-122 participates in L-citrulline binding. Residues Arg-126, Ser-174, Ser-183, Glu-259, and Tyr-271 each coordinate L-citrulline.

It belongs to the argininosuccinate synthase family. Type 1 subfamily. In terms of assembly, homotetramer.

It is found in the cytoplasm. It catalyses the reaction L-citrulline + L-aspartate + ATP = 2-(N(omega)-L-arginino)succinate + AMP + diphosphate + H(+). It participates in amino-acid biosynthesis; L-arginine biosynthesis; L-arginine from L-ornithine and carbamoyl phosphate: step 2/3. The polypeptide is Argininosuccinate synthase (Bacillus cytotoxicus (strain DSM 22905 / CIP 110041 / 391-98 / NVH 391-98)).